A 313-amino-acid chain; its full sequence is Probable 5-dehydro-4-deoxyglucarate dehydratase (313 aa).

It belongs to the DapA family.

The enzyme catalyses 5-dehydro-4-deoxy-D-glucarate + H(+) = 2,5-dioxopentanoate + CO2 + H2O. The protein operates within carbohydrate acid metabolism; D-glucarate degradation; 2,5-dioxopentanoate from D-glucarate: step 2/2. This Bradyrhizobium sp. (strain BTAi1 / ATCC BAA-1182) protein is Probable 5-dehydro-4-deoxyglucarate dehydratase.